Here is a 201-residue protein sequence, read N- to C-terminus: Transcription factor MYB82 (201 aa).

HTH myb-type domains follow at residues lysine 9–leucine 61 and arginine 62–proline 116. DNA-binding regions (H-T-H motif) lie at residues tryptophan 37–leucine 61 and tryptophan 89–leucine 112. The interval leucine 112–phenylalanine 133 is disordered.

Homodimer and heterodimer with GL1. Part of the WD40-bHLH-MYB complex. Interacts with BHLH012/MYC1 and BHLH042/TT8. Interacts (via N-terminus) with GL1 and GL3. As to expression, mainly expressed in the trichomes of new leaves.

Its subcellular location is the nucleus. In terms of biological role, transcription activation factor positively regulating trichomes development. Has a function nearly equivalent to that of GL1 and can complement gl1 mutants. In Arabidopsis thaliana (Mouse-ear cress), this protein is Transcription factor MYB82 (MYB82).